Here is a 685-residue protein sequence, read N- to C-terminus: Twinkle mtDNA helicase (685 aa).

The N-terminal 31 residues, 1 to 31 (MWLLLRRAYPLRILLPLRGEWVGRRGLPRSL), are a transit peptide targeting the mitochondrion. The interval 1–122 (MWLLLRRAYP…LCMTSLAEGS (122 aa)) is contributes to single strand DNA binding activity. Residues 54 to 214 (PVTTTEIRQY…LVFPWFTPGS (161 aa)) are N-terminal region (NTR). Positions 122–373 (SWEDLQASVE…WHKSIVSFRQ (252 aa)) are required for hexamers formation and DNA helicase activity. The primase-like domain stretch occupies residues 215 to 335 (SGLRGLKLLG…LNPKRCSLVR (121 aa)). Residues 385–636 (VEQAAGVRWS…LTFSIPPKSK (252 aa)) enclose the SF4 helicase domain. A maybe required for stable oligomeric structure region spans residues 406 to 591 (HRKGELTVFT…QEADNVLILQ (186 aa)). 416-423 (GPTGSGKT) is a binding site for ATP. A coiled-coil region spans residues 454 to 482 (RVMLTQFAVTRLEEQLDKYEEWADRFEDL). The tract at residues 641-685 (KIKDDNGLVAKKSSSGKKGAAHQNPEICLGQDPSPAQPDTSKSSG) is might negatively regulate ATPase activity. Residues 642–685 (IKDDNGLVAKKSSSGKKGAAHQNPEICLGQDPSPAQPDTSKSSG) are disordered.

As to quaternary structure, homohexamer (via C-terminus), which assembles in a ring-like structure. Homoheptamer, which assembles in a ring-like structure. Homooctamer, which assembles in a ring-like structure. Oligomers may sequentially eject two monomers (octamer&gt;heptamer&gt;hexamer) upon DNA binding. Oligomerization is Mg(2+), nucleotide and DNA-independent, however, Mg(2+) and nucleotide stabilize the homohexameric form. Interacts with POLG in vitro. Interacts with LONP1. In terms of tissue distribution, ubiquitous with the highest levels in the liver, heart and kidneys. The skeletal muscle, brain and testis showed lower but detectable expression. Expression is coregulated with MRPL43.

Its subcellular location is the mitochondrion matrix. It localises to the mitochondrion nucleoid. It is found in the mitochondrion inner membrane. The enzyme catalyses ATP + H2O = ADP + phosphate + H(+). The catalysed reaction is Couples ATP hydrolysis with the unwinding of duplex DNA at the replication fork by translocating in the 5'-3' direction. This creates two antiparallel DNA single strands (ssDNA). The leading ssDNA polymer is the template for DNA polymerase III holoenzyme which synthesizes a continuous strand.. In terms of biological role, mitochondrial helicase involved in mtDNA replication and repair. Might have a role in mtDNA repair. Has DNA strand separation activity needed to form a processive replication fork for leading strand synthesis which is catalyzed by the formation of a replisome complex with POLG and mtSDB. Preferentially unwinds DNA substrates with pre-existing 5'-and 3'- single-stranded tails but is also active on a 5'- flap substrate. Can dissociate the invading strand of immobile or mobile D-loop DNA structures irrespective of the single strand polarity of the third strand. In addition to its DNA strand separation activity, also has DNA strand annealing, DNA strand-exchange and DNA branch migration activities. The polypeptide is Twinkle mtDNA helicase (Mus musculus (Mouse)).